We begin with the raw amino-acid sequence, 184 residues long: Photosystem I assembly protein Ycf4 (184 aa).

2 consecutive transmembrane segments (helical) span residues 22-42 (FFWAFILFLGSLGFLLVGTSS) and 57-77 (IIFFPQGIVMSFYGIAGLFIS).

It belongs to the Ycf4 family.

It is found in the plastid. The protein localises to the chloroplast thylakoid membrane. Its function is as follows. Seems to be required for the assembly of the photosystem I complex. The sequence is that of Photosystem I assembly protein Ycf4 from Aethionema cordifolium (Lebanon stonecress).